The following is a 261-amino-acid chain: (R)-S-adenosyl-L-methionine hydrolase (261 aa).

Adenosine-binding residues include Asp12, Asp72, and Asn187. (R)-S-adenosyl-L-methionine contacts are provided by Asn187, Ser231, and Val239. An adenosine-binding site is contributed by Val239.

Belongs to the SAM hydrolase / SAM-dependent halogenase family.

It catalyses the reaction (R)-S-adenosyl-L-methionine + H2O = adenosine + L-methionine + H(+). In terms of biological role, specifically hydrolyzes (R)-S-adenosyl-L-methionine ((R)-SAM), the inactive form of the ubiquitous cofactor SAM, into adenosine and L-methionine. Is stereoselective as it cannot use the active form of SAM, (S)-S-adenosyl-L-methionine, as substrate. Likely plays a role in preventing accumulation of (R)-S-adenosyl-L-methionine in cells; maintenance of (S)-S-denosyl-L-methionine homochirality is important for cellular health given that the (R)-form is largely inactive as a methyl donor and can function as an inhibitor of methyltransferases. The chain is (R)-S-adenosyl-L-methionine hydrolase from Salinispora tropica (strain ATCC BAA-916 / DSM 44818 / JCM 13857 / NBRC 105044 / CNB-440).